The following is a 311-amino-acid chain: Mitochondrial ribosome-associated GTPase 1 (311 aa).

One can recognise a CP-type G domain in the interval 27-200 (AKGLKQMKTK…LFDTPGVLSP (174 aa)). GTP-binding positions include 74–77 (NKMD), 144–149 (NVGKSS), and glycine 196.

This sequence belongs to the TRAFAC class YlqF/YawG GTPase family. MTG1 subfamily.

It localises to the mitochondrion inner membrane. Plays a role in the regulation of the mitochondrial ribosome assembly and of translational activity. Displays mitochondrial GTPase activity. This Xenopus tropicalis (Western clawed frog) protein is Mitochondrial ribosome-associated GTPase 1.